The sequence spans 465 residues: Cysteine--tRNA ligase (465 aa).

Residue C30 coordinates Zn(2+). Positions I32–H42 match the 'HIGH' region motif. Zn(2+)-binding residues include C214, H239, and E243. The short motif at K271–S275 is the 'KMSKS' region element. Residue K274 participates in ATP binding.

It belongs to the class-I aminoacyl-tRNA synthetase family. In terms of assembly, monomer. Zn(2+) is required as a cofactor.

The protein localises to the cytoplasm. The catalysed reaction is tRNA(Cys) + L-cysteine + ATP = L-cysteinyl-tRNA(Cys) + AMP + diphosphate. The chain is Cysteine--tRNA ligase from Burkholderia cenocepacia (strain ATCC BAA-245 / DSM 16553 / LMG 16656 / NCTC 13227 / J2315 / CF5610) (Burkholderia cepacia (strain J2315)).